Reading from the N-terminus, the 154-residue chain is Aspartate carbamoyltransferase regulatory chain (154 aa).

Residues cysteine 109, cysteine 114, cysteine 138, and cysteine 141 each coordinate Zn(2+).

It belongs to the PyrI family. Contains catalytic and regulatory chains. Zn(2+) serves as cofactor.

In terms of biological role, involved in allosteric regulation of aspartate carbamoyltransferase. In Photorhabdus laumondii subsp. laumondii (strain DSM 15139 / CIP 105565 / TT01) (Photorhabdus luminescens subsp. laumondii), this protein is Aspartate carbamoyltransferase regulatory chain.